The chain runs to 924 residues: Bifunctional glutamine synthetase adenylyltransferase/adenylyl-removing enzyme (924 aa).

The interval 1-422 (MQTKGCRFFM…QFKKLIQEEV (422 aa)) is adenylyl removase. Residues 424–924 (SPDETDTELE…PASTMALESE (501 aa)) form an adenylyl transferase region.

Belongs to the GlnE family. Requires Mg(2+) as cofactor.

It carries out the reaction [glutamine synthetase]-O(4)-(5'-adenylyl)-L-tyrosine + phosphate = [glutamine synthetase]-L-tyrosine + ADP. The catalysed reaction is [glutamine synthetase]-L-tyrosine + ATP = [glutamine synthetase]-O(4)-(5'-adenylyl)-L-tyrosine + diphosphate. Involved in the regulation of glutamine synthetase GlnA, a key enzyme in the process to assimilate ammonia. When cellular nitrogen levels are high, the C-terminal adenylyl transferase (AT) inactivates GlnA by covalent transfer of an adenylyl group from ATP to specific tyrosine residue of GlnA, thus reducing its activity. Conversely, when nitrogen levels are low, the N-terminal adenylyl removase (AR) activates GlnA by removing the adenylyl group by phosphorolysis, increasing its activity. The regulatory region of GlnE binds the signal transduction protein PII (GlnB) which indicates the nitrogen status of the cell. The sequence is that of Bifunctional glutamine synthetase adenylyltransferase/adenylyl-removing enzyme from Acinetobacter baylyi (strain ATCC 33305 / BD413 / ADP1).